The primary structure comprises 322 residues: Phosphatidylserine decarboxylase proenzyme (322 aa).

Residues D90, H147, and S254 each act as charge relay system; for autoendoproteolytic cleavage activity in the active site. Catalysis depends on S254, which acts as the Schiff-base intermediate with substrate; via pyruvic acid; for decarboxylase activity. Position 254 is a pyruvic acid (Ser); by autocatalysis (S254). The disordered stretch occupies residues 290 to 322 (FVTPDSEPAPLPAEEIEAEHDASPLVDDKKDQV). Positions 308 to 322 (EHDASPLVDDKKDQV) are enriched in basic and acidic residues.

This sequence belongs to the phosphatidylserine decarboxylase family. PSD-B subfamily. Prokaryotic type I sub-subfamily. In terms of assembly, heterodimer of a large membrane-associated beta subunit and a small pyruvoyl-containing alpha subunit. Pyruvate is required as a cofactor. In terms of processing, is synthesized initially as an inactive proenzyme. Formation of the active enzyme involves a self-maturation process in which the active site pyruvoyl group is generated from an internal serine residue via an autocatalytic post-translational modification. Two non-identical subunits are generated from the proenzyme in this reaction, and the pyruvate is formed at the N-terminus of the alpha chain, which is derived from the carboxyl end of the proenzyme. The autoendoproteolytic cleavage occurs by a canonical serine protease mechanism, in which the side chain hydroxyl group of the serine supplies its oxygen atom to form the C-terminus of the beta chain, while the remainder of the serine residue undergoes an oxidative deamination to produce ammonia and the pyruvoyl prosthetic group on the alpha chain. During this reaction, the Ser that is part of the protease active site of the proenzyme becomes the pyruvoyl prosthetic group, which constitutes an essential element of the active site of the mature decarboxylase.

The protein localises to the cell membrane. The enzyme catalyses a 1,2-diacyl-sn-glycero-3-phospho-L-serine + H(+) = a 1,2-diacyl-sn-glycero-3-phosphoethanolamine + CO2. Its pathway is phospholipid metabolism; phosphatidylethanolamine biosynthesis; phosphatidylethanolamine from CDP-diacylglycerol: step 2/2. In terms of biological role, catalyzes the formation of phosphatidylethanolamine (PtdEtn) from phosphatidylserine (PtdSer). The polypeptide is Phosphatidylserine decarboxylase proenzyme (Escherichia fergusonii (strain ATCC 35469 / DSM 13698 / CCUG 18766 / IAM 14443 / JCM 21226 / LMG 7866 / NBRC 102419 / NCTC 12128 / CDC 0568-73)).